The sequence spans 189 residues: Large ribosomal subunit protein eL19A (189 aa).

Residue K21 forms a Glycyl lysine isopeptide (Lys-Gly) (interchain with G-Cter in ubiquitin) linkage. Residues S30 and S37 each carry the phosphoserine modification. Residues K53 and K60 each participate in a glycyl lysine isopeptide (Lys-Gly) (interchain with G-Cter in ubiquitin) cross-link. Residues 58 to 85 are disordered; the sequence is HSKSRTRAHAQSKREGRHSGYGKRKGTR. Residues 59 to 68 are compositionally biased toward basic residues; it reads SKSRTRAHAQ. Position 91 is a phosphoserine (S91). Residues K146 and K186 each participate in a glycyl lysine isopeptide (Lys-Gly) (interchain with G-Cter in ubiquitin) cross-link. The disordered stretch occupies residues 164-189; sequence LKNRAARDRRAQRVAEKRDALLKEDA.

The protein belongs to the eukaryotic ribosomal protein eL19 family. Component of the large ribosomal subunit (LSU). Mature yeast ribosomes consist of a small (40S) and a large (60S) subunit. The 40S small subunit contains 1 molecule of ribosomal RNA (18S rRNA) and 33 different proteins (encoded by 57 genes). The large 60S subunit contains 3 rRNA molecules (25S, 5.8S and 5S rRNA) and 46 different proteins (encoded by 81 genes). eL19 lies in close proximity to the binding site for eukaryotic initiation factor eIF4G.

The protein resides in the cytoplasm. Its function is as follows. Component of the ribosome, a large ribonucleoprotein complex responsible for the synthesis of proteins in the cell. The small ribosomal subunit (SSU) binds messenger RNAs (mRNAs) and translates the encoded message by selecting cognate aminoacyl-transfer RNA (tRNA) molecules. The large subunit (LSU) contains the ribosomal catalytic site termed the peptidyl transferase center (PTC), which catalyzes the formation of peptide bonds, thereby polymerizing the amino acids delivered by tRNAs into a polypeptide chain. The nascent polypeptides leave the ribosome through a tunnel in the LSU and interact with protein factors that function in enzymatic processing, targeting, and the membrane insertion of nascent chains at the exit of the ribosomal tunnel. eL19 may play a role in the last stages of translation initiation, in particular subunit joining and shedding/releasing factors. The sequence is that of Large ribosomal subunit protein eL19A from Saccharomyces cerevisiae (strain ATCC 204508 / S288c) (Baker's yeast).